The following is a 254-amino-acid chain: Alcohol dehydrogenase (254 aa).

Residue 10 to 33 (FVAGLGGIGLDTSREIVKSGPKNL) coordinates NAD(+). Residue Ser138 coordinates substrate. Catalysis depends on Tyr151, which acts as the Proton acceptor.

This sequence belongs to the short-chain dehydrogenases/reductases (SDR) family. As to quaternary structure, homodimer.

The enzyme catalyses a primary alcohol + NAD(+) = an aldehyde + NADH + H(+). The catalysed reaction is a secondary alcohol + NAD(+) = a ketone + NADH + H(+). The protein is Alcohol dehydrogenase (Adh1) of Drosophila lacicola (Fruit fly).